The primary structure comprises 189 residues: Elongation factor P (189 aa).

The protein belongs to the elongation factor P family.

It is found in the cytoplasm. It functions in the pathway protein biosynthesis; polypeptide chain elongation. In terms of biological role, involved in peptide bond synthesis. Stimulates efficient translation and peptide-bond synthesis on native or reconstituted 70S ribosomes in vitro. Probably functions indirectly by altering the affinity of the ribosome for aminoacyl-tRNA, thus increasing their reactivity as acceptors for peptidyl transferase. The protein is Elongation factor P of Rhizobium meliloti (strain 1021) (Ensifer meliloti).